The sequence spans 249 residues: Eukaryotic translation initiation factor 3 subunit K (249 aa).

In terms of domain architecture, PCI spans 46–222 (FDCYANLALL…VKVPSNKENE (177 aa)).

Belongs to the eIF-3 subunit K family. In terms of assembly, component of the eukaryotic translation initiation factor 3 (eIF-3) complex.

The protein localises to the cytoplasm. Component of the eukaryotic translation initiation factor 3 (eIF-3) complex, which is involved in protein synthesis of a specialized repertoire of mRNAs and, together with other initiation factors, stimulates binding of mRNA and methionyl-tRNAi to the 40S ribosome. The eIF-3 complex specifically targets and initiates translation of a subset of mRNAs involved in cell proliferation. The sequence is that of Eukaryotic translation initiation factor 3 subunit K from Aspergillus clavatus (strain ATCC 1007 / CBS 513.65 / DSM 816 / NCTC 3887 / NRRL 1 / QM 1276 / 107).